The following is a 1430-amino-acid chain: Death-associated protein kinase 1 (1430 aa).

Residues Tyr-13 to Ile-275 form the Protein kinase domain. ATP-binding positions include Leu-19–Val-27, Lys-42, Glu-94–Val-96, and Glu-100. Residue Asp-139 is the Proton acceptor of the active site. Asp-161 is a binding site for ATP. A calmodulin-binding region spans residues Gln-267–Asp-334. A Phosphoserine; by RPS6KA1 and RPS6KA3 modification is found at Ser-289. Residues Asn-292 to Ala-301 form an autoinhibitory domain region. Ser-308 carries the phosphoserine; by autocatalysis modification. Residues Ser-319 and Ser-333 each carry the phosphoserine modification. 8 ANK repeats span residues His-378 to Val-407, Gly-411 to Val-440, Ser-444 to Ile-473, Glu-477 to Ile-506, Glu-510 to Ala-539, Asp-543 to Tyr-572, His-576 to Ile-605, and Tyr-609 to Ala-638. The region spanning Thr-681 to Ile-955 is the Roc domain. Phosphoserine; by MAPK1 is present on Ser-734. The ANK 9 repeat unit spans residues Lys-875–Tyr-904. The residue at position 1115 (Ser-1115) is a Phosphoserine. The ANK 10 repeat unit spans residues Glu-1162–Val-1196. The region spanning Lys-1312–Ser-1396 is the Death domain.

Belongs to the protein kinase superfamily. CAMK Ser/Thr protein kinase family. DAP kinase subfamily. Interacts with KLHL20. Interacts (via death domain) with MAPK1 and MAPK3. Interacts with MAP1B (via N-terminus). Interacts with PRKD1 in an oxidative stress-regulated manner. Interacts with PIN1, PDCD6, BECN1, TSC2 and STX1A. Interacts (via kinase domain) with DAPK3 (via kinase domain). Interacts with GRINB. Interacts (via death domain) with UNC5B (via death domain). Interacts with UNC5C (via death domain). Requires Mg(2+) as cofactor. Ubiquitinated by the BCR(KLHL20) E3 ubiquitin ligase complex, leading to its degradation by the proteasome. Post-translationally, removal of the C-terminal tail of isoform 2 (corresponding to amino acids 296-337 of isoform 2) by proteolytic cleavage stimulates maximally its membrane-blebbing function. In terms of processing, in response to mitogenic stimulation (PMA or EGF), phosphorylated at Ser-289; phosphorylation suppresses DAPK1 pro-apoptotic function. Autophosphorylation at Ser-308 inhibits its catalytic activity. Phosphorylation at Ser-734 by MAPK1 increases its catalytic activity and promotes cytoplasmic retention of MAPK1. Endoplasmic-stress can cause dephosphorylation at Ser-308. Isoform 2 is expressed in normal intestinal tissue as well as in colorectal carcinomas.

It is found in the cytoplasm. Its subcellular location is the cytoskeleton. It catalyses the reaction L-seryl-[protein] + ATP = O-phospho-L-seryl-[protein] + ADP + H(+). It carries out the reaction L-threonyl-[protein] + ATP = O-phospho-L-threonyl-[protein] + ADP + H(+). Its activity is regulated as follows. Activated by Ca(2+)/calmodulin. Regulated by a locking mechanism, involving autophosphorylation at Ser-308 and calmodulin binding. In the inactive state, Ser-308 is phosphorylated. Activation involves its dephosphorylation and a release-of-autoinhibition mechanism where binding of calmodulin induces a conformational change that relieves the steric block of the active site by the autoinhibitory domain. Activity is modulated by UNC5B and NTN1. UNC5B activates it by inhibiting the phosphorylation at Ser-308, whereas NTN1 inhibits UNC5B-mediated activation of DAPK1. Endoplasmic-stress activates by causing Ser-308 dephosphorylation. In terms of biological role, calcium/calmodulin-dependent serine/threonine kinase involved in multiple cellular signaling pathways that trigger cell survival, apoptosis, and autophagy. Regulates both type I apoptotic and type II autophagic cell deaths signal, depending on the cellular setting. The former is caspase-dependent, while the latter is caspase-independent and is characterized by the accumulation of autophagic vesicles. Phosphorylates PIN1 resulting in inhibition of its catalytic activity, nuclear localization, and cellular function. Phosphorylates TPM1, enhancing stress fiber formation in endothelial cells. Phosphorylates STX1A and significantly decreases its binding to STXBP1. Phosphorylates PRKD1 and regulates JNK signaling by binding and activating PRKD1 under oxidative stress. Phosphorylates BECN1, reducing its interaction with BCL2 and BCL2L1 and promoting the induction of autophagy. Phosphorylates TSC2, disrupting the TSC1-TSC2 complex and stimulating mTORC1 activity in a growth factor-dependent pathway. Phosphorylates RPS6, MYL9 and DAPK3. Acts as a signaling amplifier of NMDA receptors at extrasynaptic sites for mediating brain damage in stroke. Cerebral ischemia recruits DAPK1 into the NMDA receptor complex and it phosphorylates GRINB at Ser-1303 inducing injurious Ca(2+) influx through NMDA receptor channels, resulting in an irreversible neuronal death. Required together with DAPK3 for phosphorylation of RPL13A upon interferon-gamma activation which is causing RPL13A involvement in transcript-selective translation inhibition. Functionally, isoform 2 cannot induce apoptosis but can induce membrane blebbing. This Homo sapiens (Human) protein is Death-associated protein kinase 1 (DAPK1).